The sequence spans 65 residues: Photosystem II reaction center protein J (65 aa).

Over residues 1 to 17 the composition is skewed to basic and acidic residues; the sequence is MSTKLKGPDGRIPDRLP. A disordered region spans residues 1 to 20; it reads MSTKLKGPDGRIPDRLPDGT. A helical transmembrane segment spans residues 36 to 56; sequence LWLVATVGGMAVLSVLGLFFF.

Belongs to the PsbJ family. In terms of assembly, PSII is composed of 1 copy each of membrane proteins PsbA, PsbB, PsbC, PsbD, PsbE, PsbF, PsbH, PsbI, PsbJ, PsbK, PsbL, PsbM, PsbT, PsbX, PsbY, Psb30/Ycf12, peripheral proteins PsbO, CyanoQ (PsbQ), PsbU, PsbV and a large number of cofactors. It forms dimeric complexes.

It is found in the cellular thylakoid membrane. Functionally, one of the components of the core complex of photosystem II (PSII). PSII is a light-driven water:plastoquinone oxidoreductase that uses light energy to abstract electrons from H(2)O, generating O(2) and a proton gradient subsequently used for ATP formation. It consists of a core antenna complex that captures photons, and an electron transfer chain that converts photonic excitation into a charge separation. This is Photosystem II reaction center protein J from Prochlorococcus marinus (strain MIT 9303).